We begin with the raw amino-acid sequence, 51 residues long: Sperm protamine P1 (51 aa).

Belongs to the protamine P1 family. Testis.

It localises to the nucleus. The protein localises to the chromosome. In terms of biological role, protamines substitute for histones in the chromatin of sperm during the haploid phase of spermatogenesis. They compact sperm DNA into a highly condensed, stable and inactive complex. The protein is Sperm protamine P1 (PRM1) of Trachypithecus johnii (Nilgiri langur).